The sequence spans 548 residues: Chaperonin GroEL (548 aa).

ATP contacts are provided by residues 30–33 (TLGP), Lys51, 87–91 (DGTTT), Gly415, and Asp495.

Belongs to the chaperonin (HSP60) family. As to quaternary structure, forms a cylinder of 14 subunits composed of two heptameric rings stacked back-to-back. Interacts with the co-chaperonin GroES.

The protein localises to the cytoplasm. The enzyme catalyses ATP + H2O + a folded polypeptide = ADP + phosphate + an unfolded polypeptide.. Its function is as follows. Together with its co-chaperonin GroES, plays an essential role in assisting protein folding. The GroEL-GroES system forms a nano-cage that allows encapsulation of the non-native substrate proteins and provides a physical environment optimized to promote and accelerate protein folding. In Photorhabdus laumondii subsp. laumondii (strain DSM 15139 / CIP 105565 / TT01) (Photorhabdus luminescens subsp. laumondii), this protein is Chaperonin GroEL.